Here is a 241-residue protein sequence, read N- to C-terminus: Phosphoadenosine 5'-phosphosulfate reductase (241 aa).

The active-site Nucleophile; cysteine thiosulfonate intermediate is the cysteine 235.

The protein belongs to the PAPS reductase family. CysH subfamily.

The protein localises to the cytoplasm. It carries out the reaction [thioredoxin]-disulfide + sulfite + adenosine 3',5'-bisphosphate + 2 H(+) = [thioredoxin]-dithiol + 3'-phosphoadenylyl sulfate. It functions in the pathway sulfur metabolism; hydrogen sulfide biosynthesis; sulfite from sulfate: step 3/3. Its function is as follows. Catalyzes the formation of sulfite from phosphoadenosine 5'-phosphosulfate (PAPS) using thioredoxin as an electron donor. The chain is Phosphoadenosine 5'-phosphosulfate reductase from Xanthomonas axonopodis pv. citri (strain 306).